A 535-amino-acid chain; its full sequence is Reticuline oxidase (535 aa).

Residues 1-23 (MMCRSLTLRFFLFIVLLQTCVRG) form the signal peptide. N42 carries an N-linked (GlcNAc...) asparagine glycan. In terms of domain architecture, FAD-binding PCMH-type spans 71–245 (TVSKPSFIVM…YAWKIKLLPV (175 aa)). Positions 108-170 (HSYEGLSYTA…DTLGFTAGWC (63 aa)) form a cross-link, 6-(S-cysteinyl)-8alpha-(pros-histidyl)-FAD (His-Cys). N475 carries N-linked (GlcNAc...) asparagine glycosylation.

Belongs to the oxygen-dependent FAD-linked oxidoreductase family. The cofactor is FAD. It depends on a metal cation as a cofactor. Post-translationally, the FAD cofactor is bound via a bicovalent 6-S-cysteinyl, 8alpha-N1-histidyl FAD linkage. Expressed in roots and stems. Not detected in leaves or reproductive organs. Restricted to the parietal region of sieve elements adjacent or proximal to laticifers.

Its subcellular location is the cytoplasmic vesicle. It catalyses the reaction (S)-reticuline + O2 = (S)-scoulerine + H2O2 + H(+). Its pathway is alkaloid biosynthesis; (S)-scoulerine biosynthesis; (S)-scoulerine from (S)-reticuline: step 1/1. Oxygen-dependent FAD-dependent oxidoreductase essential to the formation of benzophenanthridine alkaloids in the response of plants to pathogenic attack. Catalyzes the stereospecific conversion of the N-methyl moiety of (S)-reticuline into the berberine bridge carbon of (S)-scoulerine. Involved in the biosynthesis of sanguinarine. The protein is Reticuline oxidase (BBE1) of Papaver somniferum (Opium poppy).